We begin with the raw amino-acid sequence, 194 residues long: Ribonuclease HII (194 aa).

An RNase H type-2 domain is found at 3 to 193 (ILTAGVDEAG…VRNLFAQQAL (191 aa)). Positions 9, 10, and 101 each coordinate a divalent metal cation.

The protein belongs to the RNase HII family. Mn(2+) serves as cofactor. Mg(2+) is required as a cofactor.

It is found in the cytoplasm. The catalysed reaction is Endonucleolytic cleavage to 5'-phosphomonoester.. Its function is as follows. Endonuclease that specifically degrades the RNA of RNA-DNA hybrids. The polypeptide is Ribonuclease HII (Neisseria meningitidis serogroup C / serotype 2a (strain ATCC 700532 / DSM 15464 / FAM18)).